We begin with the raw amino-acid sequence, 972 residues long: 116 kDa U5 small nuclear ribonucleoprotein component (972 aa).

M1 carries the N-acetylmethionine modification. Residues 1–53 (MDTDLYDEFGNYIGPELDSDEDDDELGRETKDLDEVDEDEDDDDVGDHDEDHP) form a disordered region. Acidic residues-rich tracts occupy residues 17 to 26 (LDSDEDDDEL) and 34 to 48 (DEVDEDEDDDDVGDH). Position 19 is a phosphoserine (S19). Residue K64 forms a Glycyl lysine isopeptide (Lys-Gly) (interchain with G-Cter in SUMO1); alternate linkage. Residue K64 forms a Glycyl lysine isopeptide (Lys-Gly) (interchain with G-Cter in SUMO2); alternate linkage. T86 is modified (phosphothreonine). The tr-type G domain maps to 127–409 (ELIRNVTLCG…GIHLTKEELK (283 aa)). GTP-binding positions include 136–143 (GHLHHGKT), 204–208 (DTPGH), and 258–261 (NKID).

Belongs to the TRAFAC class translation factor GTPase superfamily. Classic translation factor GTPase family. EF-G/EF-2 subfamily. As to quaternary structure, component of the U5 snRNP and the U4/U6-U5 tri-snRNP complex, a building block of the spliceosome. The U4/U6-U5 tri-snRNP complex is composed of the U4, U6 and U5 snRNAs and at least PRPF3, PRPF4, PRPF6, PRPF8, PRPF31, SNRNP200, TXNL4A, SNRNP40, DDX23, CD2BP2, PPIH, SNU13, EFTUD2, SART1 and USP39. Component of the pre-catalytic, catalytic and post-catalytic spliceosome complexes. Component of the minor spliceosome, which splices U12-type introns. Within this complex, interacts with CRIPT. Interacts with ERBB4 and PRPF8. Interacts with PIH1D1. Interacts with RPAP3 and URI1 in a ZNHIT2-dependent manner. Interacts with NRDE2. Interacts with FAM50A. Interacts with UBL5.

The protein resides in the nucleus. In terms of biological role, required for pre-mRNA splicing as component of the spliceosome, including pre-catalytic, catalytic and post-catalytic spliceosomal complexes. Component of the U5 snRNP and the U4/U6-U5 tri-snRNP complex, a building block of the spliceosome. As a component of the minor spliceosome, involved in the splicing of U12-type introns in pre-mRNAs. The chain is 116 kDa U5 small nuclear ribonucleoprotein component (EFTUD2) from Bos taurus (Bovine).